Consider the following 540-residue polypeptide: Chaperonin GroEL (540 aa).

ATP contacts are provided by residues 29–32, 86–90, G413, 476–478, and D492; these read TLGP, DGTTT, and NAA.

It belongs to the chaperonin (HSP60) family. In terms of assembly, forms a cylinder of 14 subunits composed of two heptameric rings stacked back-to-back. Interacts with the co-chaperonin GroES.

It is found in the cytoplasm. It carries out the reaction ATP + H2O + a folded polypeptide = ADP + phosphate + an unfolded polypeptide.. In terms of biological role, together with its co-chaperonin GroES, plays an essential role in assisting protein folding. The GroEL-GroES system forms a nano-cage that allows encapsulation of the non-native substrate proteins and provides a physical environment optimized to promote and accelerate protein folding. The sequence is that of Chaperonin GroEL from Streptococcus pneumoniae (strain ATCC 700669 / Spain 23F-1).